Consider the following 222-residue polypeptide: MKTWKDVIGTEKTQPYFKHILDQVHQARASGKIVYPPPQEVFSAFQLTEFEAVKVVIIGQDPYHGPNQAHGLAFSVKPGVVPPPSLMNMYKELTQDIEGFQIPNHGYLVPWAEQGVLLLNTVLTVEQGKAHSHASFGWETFTDRVIAALNAQREKLVFLLWGSHAQKKGQFIDRQKHCVFTAPHPSPLSAHRGFLGCRHFSKTNAYLMAQGLSPIQWQLASL.

Aspartate 61 serves as the catalytic Proton acceptor.

It belongs to the uracil-DNA glycosylase (UDG) superfamily. UNG family.

The protein resides in the cytoplasm. The catalysed reaction is Hydrolyzes single-stranded DNA or mismatched double-stranded DNA and polynucleotides, releasing free uracil.. In terms of biological role, excises uracil residues from the DNA which can arise as a result of misincorporation of dUMP residues by DNA polymerase or due to deamination of cytosine. The polypeptide is Uracil-DNA glycosylase (ung) (Pasteurella multocida (strain Pm70)).